The sequence spans 63 residues: Protein D-63 (63 aa).

As to quaternary structure, homodimer.

This protein may be involved in virus assembly. This Saccharolobus solfataricus (Sulfolobus solfataricus) protein is Protein D-63.